A 712-amino-acid polypeptide reads, in one-letter code: Ribosome-releasing factor 2, mitochondrial (712 aa).

A mitochondrion-targeting transit peptide spans 1–29 (MLRCAWQNGPRQSNRWLRHLSNQIWKRSY). Residues 31-310 (SKIRNIGILA…AVNSYLPAPE (280 aa)) enclose the tr-type G domain. Residues 40–47 (AHIDAGKT), 104–108 (DTPGH), and 158–161 (NKMD) contribute to the GTP site.

This sequence belongs to the TRAFAC class translation factor GTPase superfamily. Classic translation factor GTPase family. EF-G/EF-2 subfamily.

It is found in the mitochondrion. Its function is as follows. Mitochondrial GTPase that mediates the disassembly of ribosomes from messenger RNA at the termination of mitochondrial protein biosynthesis. Not involved in the GTP-dependent ribosomal translocation step during translation elongation. This Drosophila yakuba (Fruit fly) protein is Ribosome-releasing factor 2, mitochondrial.